Here is a 289-residue protein sequence, read N- to C-terminus: Proteasome subunit beta (289 aa).

A propeptide spans 1-59 (MEHTPRNAGFALPAAYMSTMTSSFIDFLKAEAPDLLPRARVENMPAVPGGGSAFEPPHG) (removed in mature form; by autocatalysis). Threonine 60 acts as the Nucleophile in catalysis.

This sequence belongs to the peptidase T1B family. As to quaternary structure, the 20S proteasome core is composed of 14 alpha and 14 beta subunits that assemble into four stacked heptameric rings, resulting in a barrel-shaped structure. The two inner rings, each composed of seven catalytic beta subunits, are sandwiched by two outer rings, each composed of seven alpha subunits. The catalytic chamber with the active sites is on the inside of the barrel. Has a gated structure, the ends of the cylinder being occluded by the N-termini of the alpha-subunits. Is capped by the proteasome-associated ATPase, ARC.

Its subcellular location is the cytoplasm. It catalyses the reaction Cleavage of peptide bonds with very broad specificity.. Its pathway is protein degradation; proteasomal Pup-dependent pathway. The formation of the proteasomal ATPase ARC-20S proteasome complex, likely via the docking of the C-termini of ARC into the intersubunit pockets in the alpha-rings, may trigger opening of the gate for substrate entry. Interconversion between the open-gate and close-gate conformations leads to a dynamic regulation of the 20S proteasome proteolysis activity. Its function is as follows. Component of the proteasome core, a large protease complex with broad specificity involved in protein degradation. The polypeptide is Proteasome subunit beta (Saccharomonospora viridis (strain ATCC 15386 / DSM 43017 / JCM 3036 / CCUG 5913 / NBRC 12207 / NCIMB 9602 / P101) (Thermoactinomyces viridis)).